Reading from the N-terminus, the 380-residue chain is Erythronate-4-phosphate dehydrogenase (380 aa).

Residues S45 and T66 each contribute to the substrate site. NAD(+) is bound by residues 126 to 127 (QV), D146, T174, 205 to 207 (ASR), and D231. R207 is a catalytic residue. Residue E236 is part of the active site. Catalysis depends on H253, which acts as the Proton donor. G256 lines the NAD(+) pocket. Position 257 (Y257) interacts with substrate.

It belongs to the D-isomer specific 2-hydroxyacid dehydrogenase family. PdxB subfamily. As to quaternary structure, homodimer.

It is found in the cytoplasm. The enzyme catalyses 4-phospho-D-erythronate + NAD(+) = (R)-3-hydroxy-2-oxo-4-phosphooxybutanoate + NADH + H(+). The protein operates within cofactor biosynthesis; pyridoxine 5'-phosphate biosynthesis; pyridoxine 5'-phosphate from D-erythrose 4-phosphate: step 2/5. Functionally, catalyzes the oxidation of erythronate-4-phosphate to 3-hydroxy-2-oxo-4-phosphonooxybutanoate. In Pseudomonas savastanoi pv. phaseolicola (strain 1448A / Race 6) (Pseudomonas syringae pv. phaseolicola (strain 1448A / Race 6)), this protein is Erythronate-4-phosphate dehydrogenase.